Consider the following 396-residue polypeptide: 1-deoxy-D-xylulose 5-phosphate reductoisomerase (396 aa).

Positions 13, 14, 15, 16, and 127 each coordinate NADPH. Lysine 128 serves as a coordination point for 1-deoxy-D-xylulose 5-phosphate. Glutamate 129 is an NADPH binding site. Mn(2+) is bound at residue aspartate 153. Residues serine 154, glutamate 155, serine 184, and histidine 207 each coordinate 1-deoxy-D-xylulose 5-phosphate. Glutamate 155 provides a ligand contact to Mn(2+). Residue glycine 213 participates in NADPH binding. 4 residues coordinate 1-deoxy-D-xylulose 5-phosphate: serine 220, asparagine 225, lysine 226, and glutamate 229. Glutamate 229 is a Mn(2+) binding site.

It belongs to the DXR family. Mg(2+) is required as a cofactor. Requires Mn(2+) as cofactor.

It carries out the reaction 2-C-methyl-D-erythritol 4-phosphate + NADP(+) = 1-deoxy-D-xylulose 5-phosphate + NADPH + H(+). The protein operates within isoprenoid biosynthesis; isopentenyl diphosphate biosynthesis via DXP pathway; isopentenyl diphosphate from 1-deoxy-D-xylulose 5-phosphate: step 1/6. In terms of biological role, catalyzes the NADPH-dependent rearrangement and reduction of 1-deoxy-D-xylulose-5-phosphate (DXP) to 2-C-methyl-D-erythritol 4-phosphate (MEP). The polypeptide is 1-deoxy-D-xylulose 5-phosphate reductoisomerase (Pseudomonas syringae pv. tomato (strain ATCC BAA-871 / DC3000)).